The primary structure comprises 278 residues: MTASETIATAINQIDEKKEKLKKAFDDLQAHRSLLSPSFSLSWSEIDSHFSSLQSSLASRFRLLHSTSPLEHDSYRIDASDAGKSSSSEEVSEQPVVEPELRALCEKIDGIGLIKYLIRIWDDETPLNQEVSAAIRYSPDPASMVLDAIEGSNYTPSSSGRSFDVRRVFVLLMEVLIEINANITVDTRNRAKKLAYHWKSKVGVKPFEALVFLHLVAAFELGSEFDTEELSDYVFMIAKYKQATLVCNKIGVDRKRVGKLIKTLLDSGKPILAVKFMY.

Positions 1 to 36 form a coiled coil; sequence MTASETIATAINQIDEKKEKLKKAFDDLQAHRSLLS.

Belongs to the Frigida family.

In terms of biological role, truncated inactive FRIGIDA-like 1 protein. The polypeptide is Truncated FRIGIDA-like protein 1 (FRL1) (Arabidopsis thaliana (Mouse-ear cress)).